The chain runs to 225 residues: MNSIKFPVLDRTTKNSVISTTLNDLSNWSRLSSLWPLLYGTSCCFIEFASLIGSRFDFDRYGLVPRSSPRQADLILTAGTVTMKMAPSLVRLYEQMPEPKYVIAMGACTITGGMFSTDSYSTVRGVDKLIPVDVYLPGCPPKPEAVIDAITKLRKKIAREIYKDRIRPQQGNRCFTTNHKFFVVRSPHTGNYDQELLYAPSSTSEISTETFFKYKSPVSSNELVN.

C43, C44, C108, and C139 together coordinate [4Fe-4S] cluster.

Belongs to the complex I 20 kDa subunit family. In terms of assembly, NDH is composed of at least 16 different subunits, 5 of which are encoded in the nucleus. [4Fe-4S] cluster is required as a cofactor.

The protein resides in the plastid. The protein localises to the chloroplast thylakoid membrane. It carries out the reaction a plastoquinone + NADH + (n+1) H(+)(in) = a plastoquinol + NAD(+) + n H(+)(out). The catalysed reaction is a plastoquinone + NADPH + (n+1) H(+)(in) = a plastoquinol + NADP(+) + n H(+)(out). Its function is as follows. NDH shuttles electrons from NAD(P)H:plastoquinone, via FMN and iron-sulfur (Fe-S) centers, to quinones in the photosynthetic chain and possibly in a chloroplast respiratory chain. The immediate electron acceptor for the enzyme in this species is believed to be plastoquinone. Couples the redox reaction to proton translocation, and thus conserves the redox energy in a proton gradient. This is NAD(P)H-quinone oxidoreductase subunit K, chloroplastic from Nasturtium officinale (Watercress).